Here is a 1022-residue protein sequence, read N- to C-terminus: Integrator complex subunit 4 (1022 aa).

Residues threonine 148 and lysine 184 each coordinate 1D-myo-inositol hexakisphosphate. Positions lysine 818 to aspartate 840 are disordered.

The protein belongs to the Integrator subunit 4 family. In terms of assembly, belongs to the multiprotein complex Integrator, at least composed of IntS1, IntS2, IntS3, IntS4, omd/IntS5, IntS6, defl/IntS7, IntS8, IntS9, IntS10, IntS11, IntS12, asun/IntS13, IntS14 and IntS15. The core complex associates with protein phosphatase 2A subunits mts/PP2A and Pp2A-29B, to form the Integrator-PP2A (INTAC) complex. IntS4 is part of the RNA endonuclease subcomplex, composed of IntS4, IntS9, IntS11 and inositol hexakisphosphate (InsP6).

It is found in the nucleus. Its function is as follows. Component of the integrator complex, a multiprotein complex that terminates RNA polymerase II (Pol II) transcription in the promoter-proximal region of genes. The integrator complex provides a quality checkpoint during transcription elongation by driving premature transcription termination of transcripts that are unfavorably configured for transcriptional elongation: the complex terminates transcription by (1) catalyzing dephosphorylation of the C-terminal domain (CTD) of Pol II subunit Polr2A/Rbp1 and Spt5, and (2) degrading the exiting nascent RNA transcript via endonuclease activity. The integrator complex is also involved in the 3'-end processing of the U7 snRNA, and also the spliceosomal snRNAs U1, U2, U4 and U5. In Drosophila melanogaster (Fruit fly), this protein is Integrator complex subunit 4.